Reading from the N-terminus, the 370-residue chain is Developmentally-regulated GTP-binding protein 1 homolog (370 aa).

In terms of domain architecture, OBG-type G spans Ala-65–Lys-292. GTP contacts are provided by residues Gly-71–Ser-78, Asp-117–Ile-121, and Asn-250–Asp-253. A TGS domain is found at Lys-292 to Lys-369.

The protein belongs to the TRAFAC class OBG-HflX-like GTPase superfamily. OBG GTPase family.

The protein is Developmentally-regulated GTP-binding protein 1 homolog (drg1) of Dictyostelium discoideum (Social amoeba).